Here is a 448-residue protein sequence, read N- to C-terminus: Glutamyl-tRNA reductase (448 aa).

Residues 49 to 52 (TCNR), Ser-109, 114 to 116 (ETQ), and Gln-120 contribute to the substrate site. Catalysis depends on Cys-50, which acts as the Nucleophile. 189 to 194 (GAGEMS) provides a ligand contact to NADP(+).

Belongs to the glutamyl-tRNA reductase family. In terms of assembly, homodimer.

The enzyme catalyses (S)-4-amino-5-oxopentanoate + tRNA(Glu) + NADP(+) = L-glutamyl-tRNA(Glu) + NADPH + H(+). Its pathway is porphyrin-containing compound metabolism; protoporphyrin-IX biosynthesis; 5-aminolevulinate from L-glutamyl-tRNA(Glu): step 1/2. In terms of biological role, catalyzes the NADPH-dependent reduction of glutamyl-tRNA(Glu) to glutamate 1-semialdehyde (GSA). The chain is Glutamyl-tRNA reductase from Staphylococcus aureus (strain MRSA252).